Here is a 377-residue protein sequence, read N- to C-terminus: Chaperone protein DnaJ (377 aa).

Positions 5–70 constitute a J domain; the sequence is DFYETLGVSK…QKRAAYDRFG (66 aa). The segment at 138-216 adopts a CR-type zinc-finger fold; sequence GKTAQIRVPT…CHGQGRVTEE (79 aa). Zn(2+)-binding residues include Cys151, Cys154, Cys168, Cys171, Cys190, Cys193, Cys204, and Cys207. CXXCXGXG motif repeat units follow at residues 151-158, 168-175, 190-197, and 204-211; these read CDVCSGSG, CATCQGSG, CPTCHGRG, and CGKCHGQG.

The protein belongs to the DnaJ family. Homodimer. Requires Zn(2+) as cofactor.

The protein localises to the cytoplasm. Participates actively in the response to hyperosmotic and heat shock by preventing the aggregation of stress-denatured proteins and by disaggregating proteins, also in an autonomous, DnaK-independent fashion. Unfolded proteins bind initially to DnaJ; upon interaction with the DnaJ-bound protein, DnaK hydrolyzes its bound ATP, resulting in the formation of a stable complex. GrpE releases ADP from DnaK; ATP binding to DnaK triggers the release of the substrate protein, thus completing the reaction cycle. Several rounds of ATP-dependent interactions between DnaJ, DnaK and GrpE are required for fully efficient folding. Also involved, together with DnaK and GrpE, in the DNA replication of plasmids through activation of initiation proteins. This chain is Chaperone protein DnaJ, found in Agrobacterium fabrum (strain C58 / ATCC 33970) (Agrobacterium tumefaciens (strain C58)).